The chain runs to 426 residues: Serine--tRNA ligase (426 aa).

235 to 237 (TAE) is a binding site for L-serine. 266-268 (RRE) is an ATP binding site. An L-serine-binding site is contributed by Glu289. 353 to 356 (EISS) serves as a coordination point for ATP. Ser389 lines the L-serine pocket.

This sequence belongs to the class-II aminoacyl-tRNA synthetase family. Type-1 seryl-tRNA synthetase subfamily. Homodimer. The tRNA molecule binds across the dimer.

It is found in the cytoplasm. It catalyses the reaction tRNA(Ser) + L-serine + ATP = L-seryl-tRNA(Ser) + AMP + diphosphate + H(+). The enzyme catalyses tRNA(Sec) + L-serine + ATP = L-seryl-tRNA(Sec) + AMP + diphosphate + H(+). Its pathway is aminoacyl-tRNA biosynthesis; selenocysteinyl-tRNA(Sec) biosynthesis; L-seryl-tRNA(Sec) from L-serine and tRNA(Sec): step 1/1. Functionally, catalyzes the attachment of serine to tRNA(Ser). Is also able to aminoacylate tRNA(Sec) with serine, to form the misacylated tRNA L-seryl-tRNA(Sec), which will be further converted into selenocysteinyl-tRNA(Sec). The chain is Serine--tRNA ligase from Nostoc punctiforme (strain ATCC 29133 / PCC 73102).